Consider the following 452-residue polypeptide: Probable cytosolic iron-sulfur protein assembly protein 1 (452 aa).

The segment covering 1–12 (MPPPTTPTPNPS) has biased composition (pro residues). The segment at 1-24 (MPPPTTPTPNPSIPQKATLTPLPP) is disordered. 6 WD repeats span residues 70-121 (GHAR…DAAA), 161-200 (GHENEVKSLAFSPGGQYLATSSRDKSVWIWEDVSSGQGGD), 213-267 (EHDG…EWVC), 273-319 (GHGG…FGGV), 340-379 (VHTRDVYSVSWSADTGLVASTGSDGIIAVYAEESAPEDVA), and 411-452 (YEVN…VRIS).

The protein belongs to the WD repeat CIA1 family.

Essential component of the cytosolic iron-sulfur (Fe/S) protein assembly machinery. Required for the maturation of extramitochondrial Fe/S proteins. The sequence is that of Probable cytosolic iron-sulfur protein assembly protein 1 from Chaetomium globosum (strain ATCC 6205 / CBS 148.51 / DSM 1962 / NBRC 6347 / NRRL 1970) (Soil fungus).